A 1086-amino-acid polypeptide reads, in one-letter code: NAD(P) transhydrogenase, mitochondrial (1086 aa).

The N-terminal 43 residues, 1–43, are a transit peptide targeting the mitochondrion; that stretch reads MANLLKTVVTGCSCPFLSNLGSCKVLPGKKNFLRTFHTHRILW. At 44–474 the chain is on the mitochondrial matrix side; the sequence is CSAPVKPGIP…TITPFRKTMT (431 aa). Lys70 is modified (N6-acetyllysine). An N6-succinyllysine modification is found at Lys117. 182–184 is a binding site for NAD(+); it reads RVT. An N6-succinyllysine modification is found at Lys224. NAD(+) is bound by residues Val237, 257–259, and Gly287; that span reads DTR. N6-succinyllysine is present on Lys294. 2 residues coordinate NAD(+): Glu300 and Leu319. Lys331 is subject to N6-succinyllysine. An N6-acetyllysine modification is found at Lys397. Helical transmembrane passes span 475–493, 501–521, 527–546, and 558–578; these read SASVYTAGLTGILGLGIAA, MVTTFGLAGIVGYHTVWGVTP, LMSVTNAISGLTAVGGLVLM, and GLAALATFISSVNIAGGFLVT. Residues 579-595 are Mitochondrial matrix-facing; sequence QRMLDMFKRPTDPPEYN. 5 helical membrane-spanning segments follow: residues 596–616, 622–642, 646–666, 672–691, and 702–722; these read YLYLLPAGTFVGGYLASLYSG, IMYLGSGLCCVGALAGLSTQG, LGNALGMIGVAGGLAATLGGL, LLAQMSGAMALGGTIGLTIA, and LVAAFHSLVGLAAVLTCIAEY. The Cytoplasmic portion of the chain corresponds to 723 to 739; that stretch reads IIEYPHFATDAAANLTK. Helical transmembrane passes span 740–760, 778–797, 801–819, 833–853, and 857–879; these read IVAYLGTYIGGVTFSGSLVAY, HLLNAGLLAGSVGGIIPFMM, FTTGITCLGSVSALSAVMG, VVITVLNSYSGWALCAEGFLL, and LLTIVGALIGSSGAILSYIMCVA. Over 880-1086 the chain is Mitochondrial matrix; it reads MNRSLANVIL…QAKVRESYQK (207 aa). NADP(+) is bound by residues Tyr933, 965 to 970, 1009 to 1011, 1026 to 1027, 1042 to 1049, and 1068 to 1069; these read VAGRMP, NDT, GM, KRSLGVGY, and DA. At Lys1079 the chain carries N6-succinyllysine.

The protein in the N-terminal section; belongs to the AlaDH/PNT family. In the C-terminal section; belongs to the PNT beta subunit family. As to quaternary structure, homodimer.

It localises to the mitochondrion inner membrane. It carries out the reaction NAD(+) + NADPH + H(+)(in) = NADH + NADP(+) + H(+)(out). Functionally, the transhydrogenation between NADH and NADP is coupled to respiration and ATP hydrolysis and functions as a proton pump across the membrane. May play a role in reactive oxygen species (ROS) detoxification in the adrenal gland. The polypeptide is NAD(P) transhydrogenase, mitochondrial (NNT) (Bos taurus (Bovine)).